Reading from the N-terminus, the 363-residue chain is Peptide chain release factor 2 (363 aa).

The residue at position 251 (Q251) is an N5-methylglutamine.

This sequence belongs to the prokaryotic/mitochondrial release factor family. Post-translationally, methylated by PrmC. Methylation increases the termination efficiency of RF2.

The protein localises to the cytoplasm. Functionally, peptide chain release factor 2 directs the termination of translation in response to the peptide chain termination codons UGA and UAA. This Helicobacter pylori (strain J99 / ATCC 700824) (Campylobacter pylori J99) protein is Peptide chain release factor 2 (prfB).